The primary structure comprises 172 residues: Early E3 18.5 kDa glycoprotein (172 aa).

A signal peptide spans 1–19; sequence MGAILVVLALLSLLGLGSA. At 20–136 the chain is on the lumenal side; the sequence is NLNPLDHDPC…SKENIVAFSI (117 aa). N-linked (GlcNAc...) asparagine; by host glycosylation is present at Asn36. 2 cysteine pairs are disulfide-bonded: Cys37–Cys55 and Cys49–Cys111. N-linked (GlcNAc...) asparagine; by host glycans are attached at residues Asn68, Asn72, and Asn102. A helical membrane pass occupies residues 137-157; that stretch reads AYCLVTCIITAIICVCIHLLI. At 158 to 172 the chain is on the cytoplasmic side; sequence VIRPRQSNEEKEKMP. The short motif at 168-172 is the Di-lysine motif element; that stretch reads KEKMP.

Belongs to the adenoviridae E19 family. In terms of processing, both disulfide bonds are absolutely critical for the interaction with MHC antigens. N-glycosylated; high-mannose.

The protein resides in the host endoplasmic reticulum membrane. In terms of biological role, binds and retains class I heavy chains in the endoplasmic reticulum during the early period of virus infection, thereby impairing their transport to the cell surface. Also delays the expression of class I alleles that it cannot affect by direct retention. Binds transporters associated with antigen processing (TAP) and acts as a tapasin inhibitor, preventing class I/TAP association. In consequence, infected cells are masked for immune recognition by cytotoxic T-lymphocytes. This Human adenovirus B serotype 3 (HAdV-3) protein is Early E3 18.5 kDa glycoprotein.